The primary structure comprises 515 residues: Methionine--tRNA ligase (515 aa).

The 'HIGH' region signature appears at 13 to 23; it reads AYPNGKPHIGH. The 'KMSKS' region signature appears at 300–304; that stretch reads KMSKS. K303 provides a ligand contact to ATP.

It belongs to the class-I aminoacyl-tRNA synthetase family. MetG type 2B subfamily. In terms of assembly, monomer.

The protein localises to the cytoplasm. It carries out the reaction tRNA(Met) + L-methionine + ATP = L-methionyl-tRNA(Met) + AMP + diphosphate. In terms of biological role, is required not only for elongation of protein synthesis but also for the initiation of all mRNA translation through initiator tRNA(fMet) aminoacylation. This is Methionine--tRNA ligase from Brucella suis biovar 1 (strain 1330).